The primary structure comprises 646 residues: Galactofuranosyltransferase GlfT2 (646 aa).

The UDP-alpha-D-galactofuranose site is built by Arg182, Gln211, Asn240, and Asp267. Residues Asp267 and Asp269 each coordinate Mn(2+). Catalysis depends on Asp384, which acts as the Proton acceptor. Residue His408 coordinates Mn(2+).

It belongs to the glycosyltransferase 2 family. As to quaternary structure, homotetramer. The cofactor is Mn(2+). Mg(2+) is required as a cofactor.

It localises to the cell membrane. It carries out the reaction beta-D-galactofuranosyl-(1-&gt;5)-beta-D-galactofuranosyl-(1-&gt;4)-alpha-L-rhamnosyl-(1-&gt;3)-N-acetyl-alpha-D-glucosaminyl-diphospho-trans,octa-cis-decaprenol + 28 UDP-alpha-D-galactofuranose = [beta-D-galactofuranosyl-(1-&gt;5)-beta-D-galactofuranosyl-(1-&gt;6)]14-beta-D-galactofuranosyl-(1-&gt;5)-beta-D-galactofuranosyl-(1-&gt;4)-alpha-L-rhamnopyranosyl-(1-&gt;3)-N-acetyl-alpha-D-glucosaminyl-diphospho-trans,octa-cis-decaprenol + 28 UDP + 28 H(+). It participates in cell wall biogenesis; cell wall polysaccharide biosynthesis. In terms of biological role, involved in the galactan polymerization of the arabinogalactan (AG) region of the mycolylarabinogalactan-peptidoglycan (mAGP) complex, an essential component of the mycobacteria cell wall. Thus, successively transfers approximately 28 galactofuranosyl (Galf) residues from UDP-galactofuranose (UDP-Galf) onto the galactofuranosyl-galactofuranosyl-rhamnosyl-GlcNAc-diphospho-decaprenol (Galf-Galf-Rha-GlcNAc-PP-C50) acceptor produced by GlfT1, with alternating 1-&gt;5 and 1-&gt;6 links, forming a galactan domain with approximately 30 galactofuranosyl residues. This chain is Galactofuranosyltransferase GlfT2, found in Mycolicibacterium smegmatis (strain ATCC 700084 / mc(2)155) (Mycobacterium smegmatis).